Here is an 80-residue protein sequence, read N- to C-terminus: Pre-core protein X (80 aa).

The propeptide occupies 2–32 (ALTCRLRFPVPGFRGRMHRRRGMAGHGLTGG). The interval 18–45 (MHRRRGMAGHGLTGGMRRAHHRRRRASH) is disordered. Over residues 34–45 (RRAHHRRRRASH) the composition is skewed to basic residues. Positions 52-80 (ILPLLIPLIAAAIGAVPGIASVALQAQRH) are excised as a propeptide.

It belongs to the adenoviridae core protein X family. As to quaternary structure, interacts with the core-capsid bridging protein; this interaction bridges the virus core to the capsid. Post-translationally, cleaved by the viral protease during virion maturation to form the mature protein.

Its subcellular location is the host nucleus. It is found in the host nucleolus. The protein localises to the virion. Interacts with the viral DNA and aids in tightly condensing it within the capsid. Cleavage of pre-core protein X may serve to partially relax this structure within the mature virion prior to its entry into the nucleus. This chain is Pre-core protein X, found in Human adenovirus C serotype 2 (HAdV-2).